The sequence spans 107 residues: Iron-binding protein IscA (107 aa).

3 residues coordinate Fe cation: Cys35, Cys99, and Cys101.

Belongs to the HesB/IscA family. Homodimer; may form tetramers and higher multimers. Fe cation serves as cofactor.

Its function is as follows. Is able to transfer iron-sulfur clusters to apo-ferredoxin. Multiple cycles of [2Fe2S] cluster formation and transfer are observed, suggesting that IscA acts catalytically. Recruits intracellular free iron so as to provide iron for the assembly of transient iron-sulfur cluster in IscU in the presence of IscS, L-cysteine and the thioredoxin reductase system TrxA/TrxB. The polypeptide is Iron-binding protein IscA (Proteus mirabilis (strain HI4320)).